The sequence spans 338 residues: 5-dehydro-2-deoxygluconokinase (338 aa).

The protein belongs to the carbohydrate kinase PfkB family.

The enzyme catalyses 5-dehydro-2-deoxy-D-gluconate + ATP = 6-phospho-5-dehydro-2-deoxy-D-gluconate + ADP + H(+). It participates in polyol metabolism; myo-inositol degradation into acetyl-CoA; acetyl-CoA from myo-inositol: step 5/7. In terms of biological role, catalyzes the phosphorylation of 5-dehydro-2-deoxy-D-gluconate (2-deoxy-5-keto-D-gluconate or DKG) to 6-phospho-5-dehydro-2-deoxy-D-gluconate (DKGP). This chain is 5-dehydro-2-deoxygluconokinase, found in Mesomycoplasma hyopneumoniae (strain 232) (Mycoplasma hyopneumoniae).